The sequence spans 220 residues: 7-cyano-7-deazaguanine synthase 1 (220 aa).

10-20 (FSGGIDSTVLL) provides a ligand contact to ATP. Zn(2+)-binding residues include cysteine 183, cysteine 191, cysteine 194, and cysteine 197.

The protein belongs to the QueC family. In terms of assembly, homodimer. The cofactor is Zn(2+).

It catalyses the reaction 7-carboxy-7-deazaguanine + NH4(+) + ATP = 7-cyano-7-deazaguanine + ADP + phosphate + H2O + H(+). Its pathway is purine metabolism; 7-cyano-7-deazaguanine biosynthesis. Catalyzes the ATP-dependent conversion of 7-carboxy-7-deazaguanine (CDG) to 7-cyano-7-deazaguanine (preQ(0)). The chain is 7-cyano-7-deazaguanine synthase 1 from Desulfitobacterium hafniense (strain Y51).